We begin with the raw amino-acid sequence, 595 residues long: Sialic acid-binding Ig-like lectin 12 (595 aa).

The first 18 residues, 1–18 (MLLLLLLLPPLLCGRVGA), serve as a signal peptide directing secretion. 2 Ig-like V-type domains span residues 19 to 142 (KEQK…VNVT) and 143 to 269 (ASQD…VHVT). The Extracellular portion of the chain corresponds to 19–481 (KEQKDYLLTM…RPISGVTLGA (463 aa)). An intrachain disulfide couples Cys-44 to Cys-104. N-linked (GlcNAc...) asparagine glycans are attached at residues Asn-140, Asn-179, Asn-230, and Asn-290. 3 cysteine pairs are disulfide-bonded: Cys-166-Cys-299, Cys-171-Cys-231, and Cys-293-Cys-342. One can recognise an Ig-like C2-type 1 domain in the interval 275–358 (PTFSIPGTLE…AGVTMTRAVR (84 aa)). 3 N-linked (GlcNAc...) asparagine glycosylation sites follow: Asn-360, Asn-367, and Asn-385. The region spanning 365–462 (PQNLTMTVFQ…GSQHISLSLS (98 aa)) is the Ig-like C2-type 2 domain. A disulfide bond links Cys-401 and Cys-446. Residues 482–502 (FGGAGATALVFLYFCIIFVVV) form a helical membrane-spanning segment. Over 503–595 (RSCRKKSARP…YEYSEINIPK (93 aa)) the chain is Cytoplasmic. Residues 512-560 (PAVGVGDTGMEDANAVRGSASQGPLIESPADDSPPHHAPPALATPSPEE) form a disordered region. Positions 563 to 568 (IQYASL) match the ITIM motif motif. Phosphotyrosine is present on residues Tyr-565 and Tyr-588. The short motif at 586–591 (YEYSEI) is the SLAM-like motif element.

Belongs to the immunoglobulin superfamily. SIGLEC (sialic acid binding Ig-like lectin) family. In terms of tissue distribution, isoform Short is highly expressed in spleen, small intestine and adrenal gland; it is lower expressed in thyroid, placenta, brain, stomach, bone marrow, spinal cord and breast. Isoform Long is highly expressed in spleen, small intestine and bone marrow; it is lower expressed in thyroid, placenta, thymus, trachea, stomach, lung, adrenal gland, fetal brain and testis.

Its subcellular location is the membrane. Its function is as follows. Putative adhesion molecule that mediates sialic-acid dependent binding to cells. The sialic acid recognition site may be masked by cis interactions with sialic acids on the same cell surface. The polypeptide is Sialic acid-binding Ig-like lectin 12 (SIGLEC12) (Homo sapiens (Human)).